Here is a 359-residue protein sequence, read N- to C-terminus: Beta-1,3-galactosyltransferase bre-2 (359 aa).

Residues 1 to 11 (MRQSRRASSRV) are Cytoplasmic-facing. The helical; Signal-anchor for type II membrane protein transmembrane segment at 12 to 29 (NRLVVIFIIVASGFLLLY) threads the bilayer. Residues 30 to 359 (KNTQQFTQID…NPDLEELKEK (330 aa)) are Lumenal-facing. Residues Asn73, Asn163, and Asn209 are each glycosylated (N-linked (GlcNAc...) asparagine).

It belongs to the glycosyltransferase 31 family.

Its subcellular location is the golgi apparatus membrane. It participates in protein modification; protein glycosylation. Functionally, transfers N-acetylgalactosamine onto carbohydrate substrates. Involved in susceptibility to pore-forming crystal toxins in conjunction with bre-1, bre-3, bre-4, and bre-5. Involved in resistance to the nematotoxic C.cinerea galectin Cgl2. The sequence is that of Beta-1,3-galactosyltransferase bre-2 from Caenorhabditis elegans.